A 164-amino-acid chain; its full sequence is Nucleotide-binding protein Emin_0136 (164 aa).

It belongs to the YajQ family.

Its function is as follows. Nucleotide-binding protein. This chain is Nucleotide-binding protein Emin_0136, found in Elusimicrobium minutum (strain Pei191).